The chain runs to 337 residues: Glyceraldehyde-3-phosphate dehydrogenase (337 aa).

NAD(+) is bound by residues 12 to 13 (RI), aspartate 34, and arginine 79. Residues 150–152 (SCT), threonine 181, 210–211 (TG), and arginine 233 each bind D-glyceraldehyde 3-phosphate. The active-site Nucleophile is cysteine 151. Asparagine 315 contacts NAD(+).

This sequence belongs to the glyceraldehyde-3-phosphate dehydrogenase family. Homotetramer.

The protein resides in the cytoplasm. It carries out the reaction D-glyceraldehyde 3-phosphate + phosphate + NAD(+) = (2R)-3-phospho-glyceroyl phosphate + NADH + H(+). It functions in the pathway carbohydrate degradation; glycolysis; pyruvate from D-glyceraldehyde 3-phosphate: step 1/5. The polypeptide is Glyceraldehyde-3-phosphate dehydrogenase (Cryphonectria parasitica (Chestnut blight fungus)).